A 648-amino-acid chain; its full sequence is DNA helicase/primase complex-associated protein (648 aa).

The disordered stretch occupies residues 43–63; it reads LWPSDQNNTASPAGAKTDQPT.

The protein belongs to the herpesviridae HEPA family. Associates with the primase and the helicase to form the helicase-primase complex. Interacts with the origin-binding protein. Interacts with the polymerase catalytic subunit.

It localises to the host nucleus. Functionally, component of the helicase/primase complex. Unwinds the DNA at the replication forks and generates single-stranded DNA for both leading and lagging strand synthesis. The primase synthesizes short RNA primers on the lagging strand that the polymerase presumably elongates using dNTPs. The primase-associated factor has no known catalytic activity in the complex and may serve to facilitate the formation of the replisome by directly interacting with the origin-binding protein and the polymerase. The chain is DNA helicase/primase complex-associated protein (UL8) from Amazona oratrix (yellow-headed parrot).